The chain runs to 379 residues: Lipid-A-disaccharide synthase (379 aa).

It belongs to the LpxB family.

It carries out the reaction a lipid X + a UDP-2-N,3-O-bis[(3R)-3-hydroxyacyl]-alpha-D-glucosamine = a lipid A disaccharide + UDP + H(+). The protein operates within bacterial outer membrane biogenesis; LPS lipid A biosynthesis. Functionally, condensation of UDP-2,3-diacylglucosamine and 2,3-diacylglucosamine-1-phosphate to form lipid A disaccharide, a precursor of lipid A, a phosphorylated glycolipid that anchors the lipopolysaccharide to the outer membrane of the cell. The polypeptide is Lipid-A-disaccharide synthase (Vibrio parahaemolyticus serotype O3:K6 (strain RIMD 2210633)).